A 97-amino-acid polypeptide reads, in one-letter code: Lipolysis-activating peptide 1-alpha chain (97 aa).

The N-terminal stretch at 1 to 21 (MNITLFCSVFILISLAGLSVS) is a signal peptide. The 64-residue stretch at 25–88 (PGNYPMSLYG…FWAAHKNHCK (64 aa)) folds into the LCN-type CS-alpha/beta domain. 3 disulfides stabilise this stretch: Cys39-Cys62, Cys48-Cys67, and Cys52-Cys69.

Belongs to the long (3 C-C) scorpion toxin superfamily. Monomer (edited version) and heterodimer (non-edited version) of this alpha chain and a beta chain (AC D9U2A2). In terms of tissue distribution, expressed by the venom gland.

The protein resides in the secreted. Its function is as follows. The heterodimer non-edited LVP1 induces lipolysis in rat adipocytes. Induction of lipolysis by LVP1 appears to be mediated through the beta-2 adrenergic receptor pathway (ADRB2). In terms of biological role, the edited BmKBTx-like, similar to beta-toxins, may modulate voltage-gated sodium channels (Nav) and may block voltage-gated potassium channels (Kv). The protein is Lipolysis-activating peptide 1-alpha chain of Lychas mucronatus (Chinese swimming scorpion).